Consider the following 211-residue polypeptide: tRNA (guanine-N(7)-)-methyltransferase (211 aa).

The S-adenosyl-L-methionine site is built by Glu-44, Asp-69, Asp-96, and Asp-118. Asp-118 is an active-site residue. Lys-122 is a substrate binding site. The interval 124 to 129 (RHEKRR) is interaction with RNA. Substrate-binding positions include Asp-154 and 191–194 (TEYE).

Belongs to the class I-like SAM-binding methyltransferase superfamily. TrmB family.

The catalysed reaction is guanosine(46) in tRNA + S-adenosyl-L-methionine = N(7)-methylguanosine(46) in tRNA + S-adenosyl-L-homocysteine. It participates in tRNA modification; N(7)-methylguanine-tRNA biosynthesis. Catalyzes the formation of N(7)-methylguanine at position 46 (m7G46) in tRNA. This Streptococcus pneumoniae (strain CGSP14) protein is tRNA (guanine-N(7)-)-methyltransferase.